Reading from the N-terminus, the 158-residue chain is Glycine/sarcosine/betaine reductase complex component A1 (158 aa).

Sec-44 is a catalytic residue. Residue Sec-44 is a non-standard amino acid, selenocysteine.

It belongs to the GrdA family. As to quaternary structure, monomer. Component of the glycine, sarcosine and betaine reductase complexes, together with components B and C.

It carries out the reaction acetyl phosphate + [thioredoxin]-disulfide + NH4(+) + H2O = [thioredoxin]-dithiol + glycine + phosphate + H(+). The enzyme catalyses acetyl phosphate + methylamine + [thioredoxin]-disulfide + H2O = sarcosine + [thioredoxin]-dithiol + phosphate + H(+). The catalysed reaction is acetyl phosphate + trimethylamine + [thioredoxin]-disulfide + H2O = glycine betaine + [thioredoxin]-dithiol + phosphate + H(+). In terms of biological role, in the first step of glycine, betaine and sarcosine reductases, the substrate is bound to component PB via a Schiff base intermediate. Then the PB-activated substrate is nucleophilically attacked by the selenol anion of component PA to transform it to a carboxymethylated selenoether and the respective amine. By action of component PC, acetyl phosphate is formed, leaving component PA in its oxidized state. Finally component PA becomes reduced by the thioredoxin system to start a new catalytic cycle of reductive deamination. The sequence is that of Glycine/sarcosine/betaine reductase complex component A1 (grdA1) from Peptoclostridium acidaminophilum (Eubacterium acidaminophilum).